A 244-amino-acid polypeptide reads, in one-letter code: MQFSVLCKFLLLVTAVMAQTEYTPGFTTDVATTVTPTPLPSANVTTTSFSSASTETSTHSVTSTNITSIVPPPSTSHNSTTTTVPPTTSMNTTTTVPPTTSLNTTTTTAPPTTHVNSTTTVVPPTTHVNTTTVVPPTTHVNTTTVVPPTTHANTTSFVPTTTESSIHPITTGFYNTTFTTGYFNTSVTSVAVHNSTTVFPTSVPIVNTTSFNVTTIPSSAVHYASPSGLLALVVMLISAFAFLA.

An N-terminal signal peptide occupies residues 1-18 (MQFSVLCKFLLLVTAVMA). Over 19 to 223 (QTEYTPGFTT…TTIPSSAVHY (205 aa)) the chain is Lumenal. 2 stretches are compositionally biased toward low complexity: residues 55-65 (ETSTHSVTSTN) and 75-128 (TSHN…TTHV). The disordered stretch occupies residues 55 to 128 (ETSTHSVTST…TTVVPPTTHV (74 aa)). The helical transmembrane segment at 224–244 (ASPSGLLALVVMLISAFAFLA) threads the bilayer.

Its subcellular location is the endoplasmic reticulum membrane. This is an uncharacterized protein from Schizosaccharomyces pombe (strain 972 / ATCC 24843) (Fission yeast).